Consider the following 654-residue polypeptide: Peptide-N(4)-(N-acetyl-beta-glucosaminyl)asparagine amidase (654 aa).

Ala-2 carries the post-translational modification N-acetylalanine. One can recognise a PUB domain in the interval 30-91 (EASKLLLTYA…EGETHLIFPK (62 aa)). The span at 112-123 (RLDGSNKSHKVE) shows a compositional bias: basic and acidic residues. A disordered region spans residues 112 to 167 (RLDGSNKSHKVESSQQPAASTQLPTTPSSNPSGLNQHTRNRQGQSPDPPSASTVTP). The segment covering 124-167 (SSQQPAASTQLPTTPSSNPSGLNQHTRNRQGQSPDPPSASTVTP) has biased composition (polar residues). Thr-137 carries the phosphothreonine modification. 4 residues coordinate Zn(2+): Cys-250, Cys-253, Cys-283, and Cys-286. The active-site Nucleophile is Cys-309. Residues His-336 and Asp-353 contribute to the active site. The PAW domain maps to 454–654 (ELGGRISGSV…LEIIIKFSDL (201 aa)).

The protein belongs to the transglutaminase-like superfamily. PNGase family. Component of a complex required to couple retrotranslocation, ubiquitination and deglycosylation composed of NGLY1, SAKS1, AMFR, VCP and RAD23B. Interacts with the proteasome components RAD23B and PSMC1. Interacts with directly with VCP. Interacts with DERL1, bringing it close to the endoplasmic reticulum membrane. Interacts with SAKS1. The cofactor is Zn(2+).

It is found in the cytoplasm. It carries out the reaction Hydrolysis of an N(4)-(acetyl-beta-D-glucosaminyl)asparagine residue in which the glucosamine residue may be further glycosylated, to yield a (substituted) N-acetyl-beta-D-glucosaminylamine and a peptide containing an aspartate residue.. Its activity is regulated as follows. Inhibited by Z-VAD-fmk, a well-known caspase inhibitor, which inhibits enzyme activity through covalent binding of the carbohydrate to the single Cys-306 residue. In terms of biological role, specifically deglycosylates the denatured form of N-linked glycoproteins in the cytoplasm and assists their proteasome-mediated degradation. Cleaves the beta-aspartyl-glucosamine (GlcNAc) of the glycan and the amide side chain of Asn, converting Asn to Asp. Prefers proteins containing high-mannose over those bearing complex type oligosaccharides. Can recognize misfolded proteins in the endoplasmic reticulum that are exported to the cytosol to be destroyed and deglycosylate them, while it has no activity toward native proteins. Deglycosylation is a prerequisite for subsequent proteasome-mediated degradation of some, but not all, misfolded glycoproteins. The chain is Peptide-N(4)-(N-acetyl-beta-glucosaminyl)asparagine amidase (NGLY1) from Macaca fascicularis (Crab-eating macaque).